A 157-amino-acid polypeptide reads, in one-letter code: Rieske domain-containing protein (157 aa).

Met1 carries the N-acetylmethionine modification. The residue at position 6 (Ser6) is a Phosphoserine. Rieske domains are found at residues 16–94 and 17–131; these read SSVC…TGEG and SVCV…NIYV. [2Fe-2S] cluster contacts are provided by Cys57, His59, Cys80, and His83.

[2Fe-2S] cluster is required as a cofactor.

In Homo sapiens (Human), this protein is Rieske domain-containing protein (RFESD).